The chain runs to 1206 residues: DNA polymerase beta (1206 aa).

4 tandem repeats follow at residues 1071 to 1074 (AGNP), 1075 to 1078 (AGNP), 1079 to 1082 (AGNP), and 1083 to 1086 (AGNA). The 4 X 4 AA tandem repeats of A-G-[NK]-[PA] stretch occupies residues 1071-1086 (AGNPAGNPAGNPAGNA).

Belongs to the DNA polymerase type-B family.

The catalysed reaction is DNA(n) + a 2'-deoxyribonucleoside 5'-triphosphate = DNA(n+1) + diphosphate. In terms of biological role, DNA-directed DNA polymerase involved in viral DNA replication. This Ornithodoros (relapsing fever ticks) protein is DNA polymerase beta.